We begin with the raw amino-acid sequence, 5005 residues long: Bridge-like lipid transfer protein family member 1 (5005 aa).

A helical transmembrane segment spans residues V27 to Y47. Disordered stretches follow at residues R692–L718 and K1205–C1314. The span at S708–L718 shows a compositional bias: pro residues. The segment covering K1205–T1215 has biased composition (basic and acidic residues). A compositionally biased stretch (low complexity) spans S1226–S1240. A compositionally biased stretch (basic and acidic residues) spans G1248–G1275. Positions S1278–L1303 are enriched in polar residues. A phosphoserine mark is found at S1301, S1305, and S1323. T1325 carries the post-translational modification Phosphothreonine. Disordered regions lie at residues S1343–F1376, E1399–Q1425, T1521–S1544, and F1676–T1698. 2 positions are modified to phosphoserine: S1355 and S1406. Over residues T1521–L1530 the composition is skewed to basic residues. Residues Q1684–H1693 are compositionally biased toward basic and acidic residues. S1805 and S1808 each carry phosphoserine. 6 disordered regions span residues R1927 to P1991, P2165 to Q2192, T2265 to P2288, E2367 to P2387, S2400 to V2420, and T2598 to V2677. 2 stretches are compositionally biased toward polar residues: residues L1931–D1948 and T1959–S1971. 3 stretches are compositionally biased toward polar residues: residues E2367–P2379, S2400–D2418, and T2598–F2608. S2601 and S2603 each carry phosphoserine. The segment covering S2619 to A2638 has biased composition (low complexity). The span at A2643–T2665 shows a compositional bias: basic and acidic residues. S2755 is modified (phosphoserine). The interval R2928–L2967 is disordered. The segment covering K2949–F2964 has biased composition (polar residues). A phosphoserine mark is found at S3562, E3577, and S3653. Disordered regions lie at residues Y3614–I3662, S3686–Y3744, R3821–Q3843, K3935–G3954, T4089–S4145, and Q4325–Q4396. Positions S3686–F3711 are enriched in polar residues. Over residues E3727 to E3736 the composition is skewed to acidic residues. Over residues R3821 to S3837 the composition is skewed to basic and acidic residues. The segment covering S4097–S4112 has biased composition (polar residues). Positions P4117–S4145 are enriched in low complexity. At S4124 the chain carries Phosphoserine. Polar residues predominate over residues Q4325–K4358. The span at S4359–S4372 shows a compositional bias: low complexity. Over residues K4381–Q4396 the composition is skewed to polar residues.

Highly expressed in testis and ovary. Weakly or not expressed in other tissues.

It is found in the cell membrane. The protein resides in the endoplasmic reticulum membrane. The protein localises to the mitochondrion membrane. Functionally, tube-forming lipid transport protein which provides phosphatidylethanolamine for glycosylphosphatidylinositol (GPI) anchor synthesis in the endoplasmic reticulum. Plays a role in endosomal trafficking and endosome recycling. Also involved in the actin cytoskeleton and cilia structural dynamics. Acts as a regulator of phagocytosis. This Mus musculus (Mouse) protein is Bridge-like lipid transfer protein family member 1 (Bltp1).